The sequence spans 130 residues: Small ribosomal subunit protein uS11c (130 aa).

The protein belongs to the universal ribosomal protein uS11 family. Part of the 30S ribosomal subunit.

Its subcellular location is the plastid. It is found in the chloroplast. This Chlorokybus atmophyticus (Soil alga) protein is Small ribosomal subunit protein uS11c.